The primary structure comprises 345 residues: Probable deoxyhypusine synthase 2 (345 aa).

The active-site Nucleophile is lysine 292.

This sequence belongs to the deoxyhypusine synthase family. It depends on NAD(+) as a cofactor.

The catalysed reaction is [eIF5A protein]-L-lysine + spermidine = [eIF5A protein]-deoxyhypusine + propane-1,3-diamine. Its pathway is protein modification; eIF5A hypusination. Functionally, catalyzes the NAD-dependent oxidative cleavage of spermidine and the subsequent transfer of the butylamine moiety of spermidine to the epsilon-amino group of a specific lysine residue of the eIF-5A precursor protein to form the intermediate deoxyhypusine residue. This is Probable deoxyhypusine synthase 2 (dys2) from Methanosarcina acetivorans (strain ATCC 35395 / DSM 2834 / JCM 12185 / C2A).